Here is a 218-residue protein sequence, read N- to C-terminus: Ras-related protein Rab-11B (218 aa).

At Gly2 the chain carries N-acetylglycine. Arg4 is subject to Citrulline. Ser20, Gly21, Gly23, Lys24, Ser25, Asn26, Asn37, Leu38, Ser40, Ser42, and Thr43 together coordinate GTP. Position 25 (Ser25) interacts with Mg(2+). The Switch 1 motif lies at Phe36–Glu47. Mg(2+)-binding residues include Thr43 and Asp66. Positions Thr67–Gly86 match the Switch 2 motif. Positions 69, 124, 125, 127, 155, and 156 each coordinate GTP. A disordered region spans residues Arg184–Leu218. Residues Cys214 and Cys215 are each lipidated (S-geranylgeranyl cysteine). Residue Cys215 is modified to Cysteine methyl ester. Residues Gln216–Leu218 constitute a propeptide, removed in mature form.

Belongs to the small GTPase superfamily. Rab family. In terms of assembly, interacts with KCNMA1. Interacts with RAB11FIP1, RAB11FIP2, RAB11FIP3 and RAB11FIP4. May interact with TBC1D14. Interacts with ATP6V1E1. Interacts with PI4KB. Interacts (GDP-bound form) with ZFYVE27. Interacts (GDP-bound form) with KIF5A in a ZFYVE27-dependent manner. Interacts with RELCH. Interacts (in GTP-bound form) with TBC1D8B (via domain Rab-GAP TBC). Forms a complex containing RAB11B, ASAP1, Rabin8/RAB3IP, RAP11FIP3 and ARF4. Interacts with WDR44. It depends on Mg(2+) as a cofactor. In terms of processing, citrullinated by PADI4. In terms of tissue distribution, abundantly expressed in brain, heart and testis. Also detected in kidney and pancreatic islets.

Its subcellular location is the recycling endosome membrane. The protein localises to the cytoplasmic vesicle. The protein resides in the secretory vesicle. It is found in the synaptic vesicle membrane. It localises to the phagosome membrane. It catalyses the reaction GTP + H2O = GDP + phosphate + H(+). With respect to regulation, regulated by guanine nucleotide exchange factors (GEFs) which promote the exchange of bound GDP for free GTP. Regulated by GTPase activating proteins (GAPs) which increase the GTP hydrolysis activity. Inhibited by GDP dissociation inhibitors (GDIs) which prevent Rab-GDP dissociation. Functionally, the small GTPases Rab are key regulators of intracellular membrane trafficking, from the formation of transport vesicles to their fusion with membranes. Rabs cycle between an inactive GDP-bound form and an active GTP-bound form that is able to recruit to membranes different set of downstream effectors directly responsible for vesicle formation, movement, tethering and fusion. The small Rab GTPase RAB11B plays a role in endocytic recycling, regulating apical recycling of several transmembrane proteins including cystic fibrosis transmembrane conductance regulator/CFTR, epithelial sodium channel/ENaC, potassium voltage-gated channel, and voltage-dependent L-type calcium channel. May also regulate constitutive and regulated secretion, like insulin granule exocytosis. Required for melanosome transport and release from melanocytes. Also regulates V-ATPase intracellular transport in response to extracellular acidosis. Promotes Rabin8/RAB3IP preciliary vesicular trafficking to mother centriole by forming a ciliary targeting complex containing Rab11, ASAP1, Rabin8/RAB3IP, RAB11FIP3 and ARF4, thereby regulating ciliogenesis initiation. On the contrary, upon LPAR1 receptor signaling pathway activation, interaction with phosphorylated WDR44 prevents Rab11-RAB3IP-RAB11FIP3 complex formation and cilia growth. The polypeptide is Ras-related protein Rab-11B (Mus musculus (Mouse)).